The following is a 269-amino-acid chain: Undecaprenyl-diphosphatase (269 aa).

The next 6 membrane-spanning stretches (helical) occupy residues 43–63 (KGKV…CWEY), 82–102 (FILN…LLHG), 108–128 (LFSS…ILLV), 188–208 (ATEF…FYDV), 222–242 (MFAV…KTLI), and 249–269 (DFKG…AYYW).

Belongs to the UppP family.

It is found in the cell inner membrane. The catalysed reaction is di-trans,octa-cis-undecaprenyl diphosphate + H2O = di-trans,octa-cis-undecaprenyl phosphate + phosphate + H(+). Functionally, catalyzes the dephosphorylation of undecaprenyl diphosphate (UPP). Confers resistance to bacitracin. The protein is Undecaprenyl-diphosphatase of Methylobacillus flagellatus (strain ATCC 51484 / DSM 6875 / VKM B-1610 / KT).